The sequence spans 270 residues: MSVEQSLLGKETQYPTSYQPDVLFPIARAQSREKYAHIQGITQGKDWWHVFEISWLNAHGIPQVAIGRITLPASSPNLIESKSLKLYFNSLNFTQFDSTQSFIETVEKDLSAAAGAKVELTLFQVDDLEISKPQGICIDDLMPERLEQHPDATLLKLDESGEEIEVELYSHLLRSNCPVTGQPDWGTVFIRFKGKKPCYRSLLAYIISYRQHNGFHEQCVEQIFADIWQNLQPEKLMVYATYTRRGGLDINPCRVSDLTWMPKPIRLARQ.

A substrate-binding site is contributed by 79–81 (IES). 81–82 (SK) is an NADPH binding site. Catalysis depends on Cys-177, which acts as the Thioimide intermediate. Asp-184 functions as the Proton donor in the catalytic mechanism. 216 to 217 (HE) is a substrate binding site. Residue 245 to 246 (RG) participates in NADPH binding.

This sequence belongs to the GTP cyclohydrolase I family. QueF type 2 subfamily. In terms of assembly, homodimer.

The protein resides in the cytoplasm. The catalysed reaction is 7-aminomethyl-7-carbaguanine + 2 NADP(+) = 7-cyano-7-deazaguanine + 2 NADPH + 3 H(+). Its pathway is tRNA modification; tRNA-queuosine biosynthesis. In terms of biological role, catalyzes the NADPH-dependent reduction of 7-cyano-7-deazaguanine (preQ0) to 7-aminomethyl-7-deazaguanine (preQ1). The protein is NADPH-dependent 7-cyano-7-deazaguanine reductase of Acinetobacter baumannii (strain AB307-0294).